Reading from the N-terminus, the 212-residue chain is MQLFHLCLIISCSCPTVQASKLCLGWLRGMDIDTYKEFGASVELLSFLPSDFFPSIRDLLDTAFALHREALESPEHCSPHHTALRQAIVCWGELMNLATWVGSNLEDPASRELVVSYVNVNMGLKIRQLLWFHISCLTFGRETVLEYLVSVGVWIRTPQAYRPPNAPILSTLPETTVVRRRGRSPRRRTPSPRRRRSKSPRRRRSQSRESQC.

Residues 1 to 19 (MQLFHLCLIISCSCPTVQA) form the signal peptide. Positions 25–27 (GWL) are HBEAG. Positions 172-212 (LPETTVVRRRGRSPRRRTPSPRRRRSKSPRRRRSQSRESQC) are disordered. Basic residues predominate over residues 178–205 (VRRRGRSPRRRTPSPRRRRSKSPRRRRS). One copy of the 1; half-length repeat lies at 184-189 (SPRRRT). Residues 184–205 (SPRRRTPSPRRRRSKSPRRRRS) are 3 X 7 AA repeats of S-P-R-R-R-R-S. A propeptide spanning residues 184 to 212 (SPRRRTPSPRRRRSKSPRRRRSQSRESQC) is cleaved from the precursor. Repeat copies occupy residues 191 to 197 (SPRRRRS) and 199 to 205 (SPRRRRS).

The protein belongs to the orthohepadnavirus precore antigen family. Homodimerizes. Post-translationally, phosphorylated. In terms of processing, cleaved by host furin.

It localises to the secreted. The protein resides in the host nucleus. Its function is as follows. May regulate immune response to the intracellular capsid in acting as a T-cell tolerogen, by having an immunoregulatory effect which prevents destruction of infected cells by cytotoxic T-cells. This immune regulation may predispose to chronicity during perinatal infections and prevent severe liver injury during adult infections. The polypeptide is External core antigen (Hepatitis B virus genotype C subtype adr (isolate Japan/Nishioka/1983) (HBV-C)).